The sequence spans 302 residues: MAEQQAFHSGFVAIIGRPNVGKSTLLNRVVGQKVAIMSDKAQTTRNRIQGIYTTADTQMVFIDTPGIHKPHSRLGDFMVKSALSTLGEVDAVLFMINADERRGAGDNFIIDRLKTVKQPIYLVINKIDQVHPDHLLEIMDQYKDALPWKEVYPISALEGNNVDELLTTLKGQLPEGPQYYPSDQITDHPERFIISELIREKVLELTRQEVPHSTAVVIDSIKRQDEEKIHVQATIIIERSSQKGIIIGKGGSMLKKIGSLARRDIEHLLGDKVYLELWVKVQENWKDRQDLLASYGYRQDDY.

Residues 8 to 175 form the Era-type G domain; the sequence is HSGFVAIIGR…LTTLKGQLPE (168 aa). The G1 stretch occupies residues 16–23; the sequence is GRPNVGKS. 16–23 is a GTP binding site; the sequence is GRPNVGKS. The G2 stretch occupies residues 42–46; sequence QTTRN. A G3 region spans residues 63 to 66; sequence DTPG. Residues 63–67 and 125–128 contribute to the GTP site; these read DTPGI and NKID. Positions 125 to 128 are G4; that stretch reads NKID. The interval 154-156 is G5; that stretch reads ISA. The KH type-2 domain maps to 206–283; it reads TRQEVPHSTA…YLELWVKVQE (78 aa).

This sequence belongs to the TRAFAC class TrmE-Era-EngA-EngB-Septin-like GTPase superfamily. Era GTPase family. Monomer.

Its subcellular location is the cytoplasm. The protein localises to the cell membrane. In terms of biological role, an essential GTPase that binds both GDP and GTP, with rapid nucleotide exchange. Plays a role in 16S rRNA processing and 30S ribosomal subunit biogenesis and possibly also in cell cycle regulation and energy metabolism. In Lactiplantibacillus plantarum (strain ATCC BAA-793 / NCIMB 8826 / WCFS1) (Lactobacillus plantarum), this protein is GTPase Era.